The primary structure comprises 382 residues: Intermediate transcription factor 3 large subunit (382 aa).

Belongs to the orthopoxvirus OPG150 family. In terms of assembly, heterodimerizes with protein A8 to form the virus intermediate transcription factor (VITF)-3.

Its function is as follows. Acts with RNA polymerase to initiate transcription from intermediate gene promoters. This is Intermediate transcription factor 3 large subunit (OPG150) from Bos taurus (Bovine).